A 112-amino-acid chain; its full sequence is METLLGVSLVILWLQLARVNSQQGEEDPQALSIQEGENATMNCSYKTSINNLQWYRQNSGRGLVHLILIRSNEREKHSGRLRVTLDTSKKSSSLLITASRAADTASYFCATD.

A signal peptide spans 1-21; that stretch reads METLLGVSLVILWLQLARVNS. An Ig-like domain is found at 22 to 112; the sequence is QQGEEDPQAL…DTASYFCATD (91 aa). 2 N-linked (GlcNAc...) asparagine glycosylation sites follow: Asn-38 and Asn-42. An intrachain disulfide couples Cys-43 to Cys-109.

As to quaternary structure, alpha-beta TR is a heterodimer composed of an alpha and beta chain; disulfide-linked. The alpha-beta TR is associated with the transmembrane signaling CD3 coreceptor proteins to form the TR-CD3 (TcR or TCR). The assembly of alpha-beta TR heterodimers with CD3 occurs in the endoplasmic reticulum where a single alpha-beta TR heterodimer associates with one CD3D-CD3E heterodimer, one CD3G-CD3E heterodimer and one CD247 homodimer forming a stable octameric structure. CD3D-CD3E and CD3G-CD3E heterodimers preferentially associate with TR alpha and TR beta chains, respectively. The association of the CD247 homodimer is the last step of TcR assembly in the endoplasmic reticulum and is required for transport to the cell surface.

It is found in the cell membrane. In terms of biological role, v region of the variable domain of T cell receptor (TR) alpha chain that participates in the antigen recognition. Alpha-beta T cell receptors are antigen specific receptors which are essential to the immune response and are present on the cell surface of T lymphocytes. Recognize peptide-major histocompatibility (MH) (pMH) complexes that are displayed by antigen presenting cells (APC), a prerequisite for efficient T cell adaptive immunity against pathogens. Binding of alpha-beta TR to pMH complex initiates TR-CD3 clustering on the cell surface and intracellular activation of LCK that phosphorylates the ITAM motifs of CD3G, CD3D, CD3E and CD247 enabling the recruitment of ZAP70. In turn ZAP70 phosphorylates LAT, which recruits numerous signaling molecules to form the LAT signalosome. The LAT signalosome propagates signal branching to three major signaling pathways, the calcium, the mitogen-activated protein kinase (MAPK) kinase and the nuclear factor NF-kappa-B (NF-kB) pathways, leading to the mobilization of transcription factors that are critical for gene expression and essential for T cell growth and differentiation. The T cell repertoire is generated in the thymus, by V-(D)-J rearrangement. This repertoire is then shaped by intrathymic selection events to generate a peripheral T cell pool of self-MH restricted, non-autoaggressive T cells. Post-thymic interaction of alpha-beta TR with the pMH complexes shapes TR structural and functional avidity. The polypeptide is T cell receptor alpha variable 17 (Homo sapiens (Human)).